The following is a 722-amino-acid chain: Delta-like protein 1 (722 aa).

An N-terminal signal peptide occupies residues 1 to 17; it reads MGRRSALALAVVSALLC. The Extracellular segment spans residues 18 to 545; sequence QVWSSGVFEL…MESQGGPFPW (528 aa). The DSL domain maps to 176–220; sequence FVCDEHYYGEGCSVFCRPRDDAFGHFTCGDRGEKMCDPGWKGQYC. Disulfide bonds link Cys-178-Cys-187, Cys-191-Cys-203, Cys-211-Cys-220, Cys-225-Cys-236, Cys-229-Cys-242, Cys-244-Cys-253, Cys-256-Cys-267, Cys-262-Cys-273, Cys-275-Cys-284, Cys-291-Cys-303, Cys-297-Cys-313, Cys-315-Cys-324, Cys-331-Cys-342, Cys-336-Cys-351, Cys-353-Cys-362, Cys-369-Cys-380, Cys-374-Cys-390, Cys-392-Cys-401, Cys-408-Cys-419, Cys-413-Cys-428, Cys-430-Cys-439, Cys-446-Cys-457, Cys-451-Cys-466, Cys-468-Cys-477, Cys-484-Cys-495, Cys-489-Cys-504, and Cys-506-Cys-515. 3 consecutive EGF-like domains span residues 225–253, 256–284, and 291–324; these read CLPG…GRYC, CIRY…GLFC, and CTHH…GANC. The region spanning 331-362 is the EGF-like 4; calcium-binding domain; sequence CAPSPCKNGASCTDLEDSFSCTCPPGFYGKVC. EGF-like domains are found at residues 369–401 and 408–439; these read CADG…GFNC and CGSS…GRYC. In terms of domain architecture, EGF-like 7; calcium-binding spans 446–477; sequence CASSPCANGGTCRDSVNDFSCTCPPGYTGKNC. N-linked (GlcNAc...) asparagine glycosylation is present at Asn-476. In terms of domain architecture, EGF-like 8 spans 484-515; it reads CEHAPCHNGATCHQRGQRYMCECAQGYGGPNC. The chain crosses the membrane as a helical span at residues 546-568; the sequence is VAVCAGVVLVLLLLLGCAAVVVC. Over 569–722 the chain is Cytoplasmic; the sequence is VRLKLQKHQP…KDECVIATEV (154 aa). Residue Lys-613 forms a Glycyl lysine isopeptide (Lys-Gly) (interchain with G-Cter in ubiquitin) linkage. At Thr-638 the chain carries Phosphothreonine. Residues 655–664 are compositionally biased toward basic and acidic residues; sequence RDTHSKRDTK. Residues 655–697 form a disordered region; it reads RDTHSKRDTKCQSQSSAGEEKIAPTLRGGEIPDRKRPESVYST. Ser-693 is subject to Phosphoserine; by PKB. Residue Ser-696 is modified to Phosphoserine. The tract at residues 719–722 is interaction with MAGI1; the sequence is ATEV.

As to quaternary structure, homodimer. Interacts with TJP1. Interacts with MMP14; inhibits DLL1-induced Notch signaling. Interacts with MAGI1 (via PDZ domain); forms a complex with CTNNB1 and CDH2 and promotes recruitment to the adherens junction and stabilization on the cell surface. Interacts with PSEN1; undergoes a presenilin-dependent gamma-secretase cleavage that releases a Dll1-intracellular form. Interacts with MFAP5. Interacts with MIB1. Interacts with NEURL1B; leads to ubiquitination. Interacts with NEURL1. Interacts with SYNJ2BP; enhances DLL1 protein stability, and promotes Notch signaling in endothelial cells. Interacts with MAGI1, MAGI2, MAGI3 and MPDZ. Interacts (via ubiquitin) with EPN1 (via IUM domain); binding with NOTCH1 attached to neighboring cell, promotes ligand ubiquitination and EPN1 interaction, leading to NECD transendocytosis and Notch signaling. Interacts with NOTCH1. In terms of processing, ubiquitinated by MIB (MIB1 or MIB2), leading to its endocytosis and subsequent degradation. Ubiquitinated; promotes recycling back to the plasma membrane and confers a strong affinity for NOTCH1. Multi-ubiquitination of Lys-613 by MIB1 promotes both cis and trans-interaction with NOTCH1, as well as activation of Notch signaling. Ubiquitinated by NEURL1B. Post-translationally, phosphorylated in a membrane association-dependent manner. Phosphorylation at Ser-696 requires the presence of Ser-693, whereas phosphorylation at Thr-638 and Ser-693 occurs independently of the other sites. Phosphorylation is required for full ligand activity in vitro and affects surface presentation, ectodomain shedding, and endocytosis. Cleaved by MMP14; negatively regulates DLL1-induced Notch signaling in HPCs, modulating B-lymphocyte differentiation in bone marrow. Undergoes two consecutive processing events: a shedding event, partially by ADAM10, that generates a soluble extracellular form and an intracellular membrane-anchored form, followed by a gamma-secretase cleavage releasing an intracellular fragment. In terms of processing, O-fucosylated. Can be elongated to a disaccharide by MFNG. As to expression, in the embryo, expressed in the paraxial mesoderm and nervous system. Expressed at high levels in adult heart and at lower levels, in adult lung. Highly expressed in satellite cells from masseter and tongue than in satellite cells from leg and extraocular muscle.?.

The protein localises to the apical cell membrane. Its subcellular location is the cell junction. The protein resides in the adherens junction. It localises to the membrane raft. It is found in the cell membrane. The protein localises to the nucleus. Its function is as follows. Transmembrane ligand protein of NOTCH1, NOTCH2 and NOTCH3 receptors that binds the extracellular domain (ECD) of Notch receptor in a cis and trans fashion manner. Following transinteraction, ligand cells produce mechanical force that depends of a clathrin-mediated endocytosis, requiring ligand ubiquitination, EPN1 interaction, and actin polymerisation; these events promote Notch receptor extracellular domain (NECD) transendocytosis and triggers Notch signaling through induction of cleavage, hyperphosphorylation, and nuclear accumulation of the intracellular domain of Notch receptors (NICD). Is required for embryonic development and maintenance of adult stem cells in many different tissues and immune systeme; the DLL1-induced Notch signaling is mediated through an intercellular communication that regulates cell lineage, cell specification, cell patterning and morphogenesis through effects on differentiation and proliferation. Plays a role in brain development at different level, namely by regulating neuronal differentiation of neural precursor cells via cell-cell interaction, most likely through the lateral inhibitory system in an endogenous level dependent-manner. During neocortex development, Dll1-Notch signaling transmission is mediated by dynamic interactions between intermediate neurogenic progenitors and radial glia; the cell-cell interactions are mediated via dynamic and transient elongation processes, likely to reactivate/maintain Notch activity in neighboring progenitors, and coordinate progenitor cell division and differentiation across radial and zonal boundaries. During cerebellar development, regulates Bergmann glial monolayer formation and its morphological maturation through a Notch signaling pathway. At the retina and spinal cord level, regulates neurogenesis by preventing the premature differentiation of neural progenitors and also by maintaining progenitors in spinal cord through Notch signaling pathway. Also controls neurogenesis of the neural tube in a progenitor domain-specific fashion along the dorsoventral axis. Maintains quiescence of neural stem cells and plays a role as a fate determinant that segregates asymmetrically to one daughter cell during neural stem cells mitosis, resulting in neuronal differentiation in Dll1-inheriting cell. Plays a role in immune systeme development, namely the development of all T-cells and marginal zone (MZ) B cells. Blocks the differentiation of progenitor cells into the B-cell lineage while promoting the emergence of a population of cells with the characteristics of a T-cell/NK-cell precursor. Upon MMP14 cleavage, negatively regulates Notch signaling in haematopoietic progenitor cells to specifically maintain normal B-cell development in bone marrow. Also plays a role during muscle development. During early development, inhibits myoblasts differentiation from the medial dermomyotomal lip and later regulates progenitor cell differentiation. Directly modulates cell adhesion and basal lamina formation in satellite cells through Notch signaling. Maintains myogenic progenitors pool by suppressing differentiation through down-regulation of MYOD1 and is required for satellite cell homing and PAX7 expression. During craniofacial and trunk myogenesis suppresses differentiation of cranial mesoderm-derived and somite-derived muscle via MYOD1 regulation but in cranial mesoderm-derived progenitors, is neither required for satellite cell homing nor for PAX7 expression. Also plays a role during pancreatic cell development. During type B pancreatic cell development, may be involved in the initiation of proximodistal patterning in the early pancreatic epithelium. Stimulates multipotent pancreatic progenitor cells proliferation and pancreatic growth by maintaining HES1 expression and PTF1A protein levels. During fetal stages of development, is required to maintain arterial identity and the responsiveness of arterial endothelial cells for VEGFA through regulation of KDR activation and NRP1 expression. Controls sprouting angiogenesis and subsequent vertical branch formation through regulation on tip cell differentiation. Negatively regulates goblet cell differentiation in intestine and controls secretory fat commitment through lateral inhibition in small intestine. Plays a role during inner ear development; negatively regulates auditory hair cell differentiation. Plays a role during nephron development through Notch signaling pathway. Regulates growth, blood pressure and energy homeostasis. This Mus musculus (Mouse) protein is Delta-like protein 1 (Dll1).